The following is a 177-amino-acid chain: Large ribosomal subunit protein uL6 (177 aa).

Positions 152–171 (RPPEPYKGKGVRYDDEEVRR) are enriched in basic and acidic residues. Positions 152–177 (RPPEPYKGKGVRYDDEEVRRKEAKKK) are disordered.

It belongs to the universal ribosomal protein uL6 family. In terms of assembly, part of the 50S ribosomal subunit.

In terms of biological role, this protein binds to the 23S rRNA, and is important in its secondary structure. It is located near the subunit interface in the base of the L7/L12 stalk, and near the tRNA binding site of the peptidyltransferase center. This is Large ribosomal subunit protein uL6 from Shewanella sp. (strain MR-4).